The following is a 126-amino-acid chain: Holo-[acyl-carrier-protein] synthase (126 aa).

Mg(2+) contacts are provided by Asp9 and Glu58.

This sequence belongs to the P-Pant transferase superfamily. AcpS family. It depends on Mg(2+) as a cofactor.

Its subcellular location is the cytoplasm. The enzyme catalyses apo-[ACP] + CoA = holo-[ACP] + adenosine 3',5'-bisphosphate + H(+). Functionally, transfers the 4'-phosphopantetheine moiety from coenzyme A to a Ser of acyl-carrier-protein. This Aliivibrio salmonicida (strain LFI1238) (Vibrio salmonicida (strain LFI1238)) protein is Holo-[acyl-carrier-protein] synthase.